Reading from the N-terminus, the 792-residue chain is Probable beta-D-xylosidase 6 (792 aa).

Positions 1–18 (MNLQLTLISLLFFTSAIA) are cleaved as a signal peptide. N-linked (GlcNAc...) asparagine glycans are attached at residues Asn44, Asn104, Asn124, and Asn239. Asp309 is a catalytic residue. Residues Asn444 and Asn618 are each glycosylated (N-linked (GlcNAc...) asparagine).

This sequence belongs to the glycosyl hydrolase 3 family.

The protein resides in the secreted. It is found in the extracellular space. It localises to the extracellular matrix. The polypeptide is Probable beta-D-xylosidase 6 (BXL6) (Arabidopsis thaliana (Mouse-ear cress)).